The following is a 232-amino-acid chain: Imidazole glycerol phosphate synthase subunit HisF (232 aa).

Active-site residues include Asp11 and Asp130.

This sequence belongs to the HisA/HisF family. As to quaternary structure, heterodimer of HisH and HisF.

Its subcellular location is the cytoplasm. It carries out the reaction 5-[(5-phospho-1-deoxy-D-ribulos-1-ylimino)methylamino]-1-(5-phospho-beta-D-ribosyl)imidazole-4-carboxamide + L-glutamine = D-erythro-1-(imidazol-4-yl)glycerol 3-phosphate + 5-amino-1-(5-phospho-beta-D-ribosyl)imidazole-4-carboxamide + L-glutamate + H(+). The protein operates within amino-acid biosynthesis; L-histidine biosynthesis; L-histidine from 5-phospho-alpha-D-ribose 1-diphosphate: step 5/9. IGPS catalyzes the conversion of PRFAR and glutamine to IGP, AICAR and glutamate. The HisF subunit catalyzes the cyclization activity that produces IGP and AICAR from PRFAR using the ammonia provided by the HisH subunit. The sequence is that of Imidazole glycerol phosphate synthase subunit HisF from Listeria monocytogenes serotype 4a (strain HCC23).